The chain runs to 295 residues: Geranylfarnesyl diphosphate synthase (295 aa).

Positions 51, 54, and 83 each coordinate isopentenyl diphosphate. Mg(2+) contacts are provided by D90 and D94. R99 contributes to the an all-trans-polyprenyl diphosphate binding site. An isopentenyl diphosphate-binding site is contributed by R100. Residues K174, T175, and Q212 each contribute to the an all-trans-polyprenyl diphosphate site.

The protein belongs to the FPP/GGPP synthase family. Homodimer. Requires Mg(2+) as cofactor.

The enzyme catalyses isopentenyl diphosphate + (2E,6E,10E)-geranylgeranyl diphosphate = (2E,6E,10E,14E)-geranylfarnesyl diphosphate + diphosphate. Its function is as follows. Involved in biosynthesis of the polyprenyl side-chain of methanophenazine, an electron carrier utilized for methanogenesis. Catalyzes the condensation of isopentenyl pyrophosphate with the allylic pyrophosphates to yield geranylfarnesyl diphosphate (GFPP). It prefers geranylgeranyl diphosphate (GGPP) and farnesyl diphosphate (FPP) as allylic substrate. This is Geranylfarnesyl diphosphate synthase from Methanosarcina mazei (strain ATCC BAA-159 / DSM 3647 / Goe1 / Go1 / JCM 11833 / OCM 88) (Methanosarcina frisia).